Reading from the N-terminus, the 269-residue chain is 3'(2'),5'-bisphosphate nucleotidase CysQ (269 aa).

The Mg(2+) site is built by E69, D89, L91, D92, and D216. Substrate is bound at residue E69. Substrate-binding positions include 91–94 (LDGT) and D216.

This sequence belongs to the inositol monophosphatase superfamily. CysQ family. It depends on Mg(2+) as a cofactor.

The protein resides in the cell inner membrane. The enzyme catalyses adenosine 3',5'-bisphosphate + H2O = AMP + phosphate. Functionally, converts adenosine-3',5'-bisphosphate (PAP) to AMP. In Haemophilus influenzae (strain ATCC 51907 / DSM 11121 / KW20 / Rd), this protein is 3'(2'),5'-bisphosphate nucleotidase CysQ.